The following is a 96-amino-acid chain: MLVLVTYDVNTETPAGRRRLRRIAKTCQNYGQRVQFSVFECNVDPAQWVKLRSKLLNEMDPKLDSLRFYFLGSNWQGRVEHEGAKEPRDLEGTLIL.

Aspartate 8 provides a ligand contact to Mg(2+).

Belongs to the CRISPR-associated endoribonuclease Cas2 protein family. Homodimer, forms a heterotetramer with a Cas1 homodimer. Mg(2+) serves as cofactor.

In terms of biological role, CRISPR (clustered regularly interspaced short palindromic repeat), is an adaptive immune system that provides protection against mobile genetic elements (viruses, transposable elements and conjugative plasmids). CRISPR clusters contain sequences complementary to antecedent mobile elements and target invading nucleic acids. CRISPR clusters are transcribed and processed into CRISPR RNA (crRNA). Functions as a ssRNA-specific endoribonuclease. Involved in the integration of spacer DNA into the CRISPR cassette. The polypeptide is CRISPR-associated endoribonuclease Cas2 (Chlorobaculum tepidum (strain ATCC 49652 / DSM 12025 / NBRC 103806 / TLS) (Chlorobium tepidum)).